An 878-amino-acid polypeptide reads, in one-letter code: Leucine--tRNA ligase (878 aa).

The span at 1-14 (MTASKSSSATASAS) shows a compositional bias: low complexity. Residues 1 to 23 (MTASKSSSATASASDRPDRYDPI) form a disordered region. The short motif at 58–68 (PYPSGSLHMGH) is the 'HIGH' region element. A 'KMSKS' region motif is present at residues 632-636 (KMSKS). Lysine 635 provides a ligand contact to ATP.

Belongs to the class-I aminoacyl-tRNA synthetase family.

It is found in the cytoplasm. The enzyme catalyses tRNA(Leu) + L-leucine + ATP = L-leucyl-tRNA(Leu) + AMP + diphosphate. This is Leucine--tRNA ligase from Synechococcus sp. (strain WH7803).